Here is a 93-residue protein sequence, read N- to C-terminus: UPF0358 protein lin1058 (93 aa).

The protein belongs to the UPF0358 family.

The chain is UPF0358 protein lin1058 from Listeria innocua serovar 6a (strain ATCC BAA-680 / CLIP 11262).